A 279-amino-acid polypeptide reads, in one-letter code: Tryptophan synthase alpha chain (279 aa).

Catalysis depends on proton acceptor residues Glu-63 and Asp-74.

Belongs to the TrpA family. As to quaternary structure, tetramer of two alpha and two beta chains.

It catalyses the reaction (1S,2R)-1-C-(indol-3-yl)glycerol 3-phosphate + L-serine = D-glyceraldehyde 3-phosphate + L-tryptophan + H2O. The protein operates within amino-acid biosynthesis; L-tryptophan biosynthesis; L-tryptophan from chorismate: step 5/5. In terms of biological role, the alpha subunit is responsible for the aldol cleavage of indoleglycerol phosphate to indole and glyceraldehyde 3-phosphate. This is Tryptophan synthase alpha chain from Prochlorococcus marinus subsp. pastoris (strain CCMP1986 / NIES-2087 / MED4).